The sequence spans 509 residues: ATP synthase subunit alpha (509 aa).

169–176 (GDRQTGKT) is a binding site for ATP.

It belongs to the ATPase alpha/beta chains family. In terms of assembly, F-type ATPases have 2 components, CF(1) - the catalytic core - and CF(0) - the membrane proton channel. CF(1) has five subunits: alpha(3), beta(3), gamma(1), delta(1), epsilon(1). CF(0) has three main subunits: a(1), b(2) and c(9-12). The alpha and beta chains form an alternating ring which encloses part of the gamma chain. CF(1) is attached to CF(0) by a central stalk formed by the gamma and epsilon chains, while a peripheral stalk is formed by the delta and b chains.

It localises to the cell inner membrane. It catalyses the reaction ATP + H2O + 4 H(+)(in) = ADP + phosphate + 5 H(+)(out). Functionally, produces ATP from ADP in the presence of a proton gradient across the membrane. The alpha chain is a regulatory subunit. The protein is ATP synthase subunit alpha of Sinorhizobium medicae (strain WSM419) (Ensifer medicae).